The following is a 327-amino-acid chain: Malate dehydrogenase (327 aa).

NAD(+) is bound at residue glycine 11–serine 17. Positions 92 and 98 each coordinate substrate. NAD(+) contacts are provided by residues asparagine 105, glutamine 112, and valine 129–asparagine 131. Residues asparagine 131 and arginine 162 each contribute to the substrate site. Histidine 187 serves as the catalytic Proton acceptor.

Belongs to the LDH/MDH superfamily. MDH type 2 family.

It carries out the reaction (S)-malate + NAD(+) = oxaloacetate + NADH + H(+). Functionally, catalyzes the reversible oxidation of malate to oxaloacetate. In Teredinibacter turnerae (strain ATCC 39867 / T7901), this protein is Malate dehydrogenase.